Reading from the N-terminus, the 106-residue chain is Protein RnfH (106 aa).

This sequence belongs to the UPF0125 (RnfH) family.

The sequence is that of Protein RnfH from Ectopseudomonas mendocina (strain ymp) (Pseudomonas mendocina).